Reading from the N-terminus, the 530-residue chain is NAD(+) kinase (530 aa).

Disordered regions lie at residues 1-27, 57-99, and 486-530; these read MKENDMNNGVDKWVNEEDGRNDHHNNN, ISSE…KSSN, and SLEA…RFSV. Residues 13-25 show a composition bias toward basic and acidic residues; sequence WVNEEDGRNDHHN. Over residues 59-75 the composition is skewed to low complexity; the sequence is SESSSRRSSLLNKDSSL. Residues 88-99 are compositionally biased toward polar residues; the sequence is INGTRGSSKSSN. Phosphoserine occurs at positions 499 and 503. A compositionally biased stretch (acidic residues) spans 499–508; the sequence is SDDESDDESV.

Belongs to the NAD kinase family. In terms of assembly, homohexamer.

The enzyme catalyses NAD(+) + ATP = ADP + NADP(+) + H(+). Specifically phosphorylates NAD in the presence of ATP, dATP, or CTP as phosphoryl donors. This chain is NAD(+) kinase (UTR1), found in Saccharomyces cerevisiae (strain ATCC 204508 / S288c) (Baker's yeast).